Consider the following 317-residue polypeptide: 4-hydroxy-3-methylbut-2-enyl diphosphate reductase (317 aa).

Cys-12 lines the [4Fe-4S] cluster pocket. (2E)-4-hydroxy-3-methylbut-2-enyl diphosphate contacts are provided by His-43 and His-81. Residues His-43 and His-81 each contribute to the dimethylallyl diphosphate site. Isopentenyl diphosphate contacts are provided by His-43 and His-81. Position 103 (Cys-103) interacts with [4Fe-4S] cluster. Residue His-131 participates in (2E)-4-hydroxy-3-methylbut-2-enyl diphosphate binding. His-131 serves as a coordination point for dimethylallyl diphosphate. Residue His-131 participates in isopentenyl diphosphate binding. Residue Glu-133 is the Proton donor of the active site. Thr-172 contacts (2E)-4-hydroxy-3-methylbut-2-enyl diphosphate. Cys-200 provides a ligand contact to [4Fe-4S] cluster. The (2E)-4-hydroxy-3-methylbut-2-enyl diphosphate site is built by Ser-228, Asn-230, and Ser-273. Dimethylallyl diphosphate-binding residues include Ser-228, Asn-230, and Ser-273. Positions 228, 230, and 273 each coordinate isopentenyl diphosphate.

The protein belongs to the IspH family. [4Fe-4S] cluster serves as cofactor.

The catalysed reaction is isopentenyl diphosphate + 2 oxidized [2Fe-2S]-[ferredoxin] + H2O = (2E)-4-hydroxy-3-methylbut-2-enyl diphosphate + 2 reduced [2Fe-2S]-[ferredoxin] + 2 H(+). The enzyme catalyses dimethylallyl diphosphate + 2 oxidized [2Fe-2S]-[ferredoxin] + H2O = (2E)-4-hydroxy-3-methylbut-2-enyl diphosphate + 2 reduced [2Fe-2S]-[ferredoxin] + 2 H(+). The protein operates within isoprenoid biosynthesis; dimethylallyl diphosphate biosynthesis; dimethylallyl diphosphate from (2E)-4-hydroxy-3-methylbutenyl diphosphate: step 1/1. It participates in isoprenoid biosynthesis; isopentenyl diphosphate biosynthesis via DXP pathway; isopentenyl diphosphate from 1-deoxy-D-xylulose 5-phosphate: step 6/6. In terms of biological role, catalyzes the conversion of 1-hydroxy-2-methyl-2-(E)-butenyl 4-diphosphate (HMBPP) into a mixture of isopentenyl diphosphate (IPP) and dimethylallyl diphosphate (DMAPP). Acts in the terminal step of the DOXP/MEP pathway for isoprenoid precursor biosynthesis. In Exiguobacterium sp. (strain ATCC BAA-1283 / AT1b), this protein is 4-hydroxy-3-methylbut-2-enyl diphosphate reductase.